The primary structure comprises 167 residues: uncharacterized protein (167 aa).

It to A.thaliana At2g20940.

This is an uncharacterized protein from Schizosaccharomyces pombe (strain 972 / ATCC 24843) (Fission yeast).